Consider the following 478-residue polypeptide: Chromosomal replication initiator protein DnaA (478 aa).

The tract at residues 1-71 (MNLTHIWKTT…RNALTRVVGY (71 aa)) is domain I, interacts with DnaA modulators. Residues 71 to 136 (YPVQVQVLIA…LDLASAMRSG (66 aa)) are domain II. The tract at residues 137 to 353 (MLNPRYTFAS…GSLNRVAAYA (217 aa)) is domain III, AAA+ region. ATP is bound by residues G181, G183, K184, and T185. Positions 354–478 (ELNRLPITID…RERIQMMRGL (125 aa)) are domain IV, binds dsDNA.

The protein belongs to the DnaA family. In terms of assembly, oligomerizes as a right-handed, spiral filament on DNA at oriC.

It is found in the cytoplasm. Its function is as follows. Plays an essential role in the initiation and regulation of chromosomal replication. ATP-DnaA binds to the origin of replication (oriC) to initiate formation of the DNA replication initiation complex once per cell cycle. Binds the DnaA box (a 9 base pair repeat at the origin) and separates the double-stranded (ds)DNA. Forms a right-handed helical filament on oriC DNA; dsDNA binds to the exterior of the filament while single-stranded (ss)DNA is stabiized in the filament's interior. The ATP-DnaA-oriC complex binds and stabilizes one strand of the AT-rich DNA unwinding element (DUE), permitting loading of DNA polymerase. After initiation quickly degrades to an ADP-DnaA complex that is not apt for DNA replication. Binds acidic phospholipids. This chain is Chromosomal replication initiator protein DnaA, found in Chloroflexus aggregans (strain MD-66 / DSM 9485).